Reading from the N-terminus, the 305-residue chain is MAQVKRIRRNISGIILLDKPLGFTSNAALQKVRWLLNAEKAGHTGSLDPLATGVLPLCFGEATKFSQYLLDSDKGYETVMQMGQTTNTGDAEGEVLQTRDVTVGRADIEALLPRFRGPISQIPPMYSALKRDGQPLYKLARAGEVVEREARSVTINRLELLECEGTRARLSVGCSKGTYIRTLVEDIGEALGCGAYVAELRRTQAGPFALAQTVTLEELEQAHAEGGNEALDRFLMPSDSGLQDWPLVSLSEHSAFYWLHGQAVRAPDAPQFGMVRVQDHNARFIGIGEVSEDGRIAPRRLIRSE.

The Nucleophile role is filled by Asp-48.

This sequence belongs to the pseudouridine synthase TruB family. Type 1 subfamily.

The catalysed reaction is uridine(55) in tRNA = pseudouridine(55) in tRNA. Responsible for synthesis of pseudouridine from uracil-55 in the psi GC loop of transfer RNAs. This chain is tRNA pseudouridine synthase B, found in Pseudomonas putida (strain ATCC 700007 / DSM 6899 / JCM 31910 / BCRC 17059 / LMG 24140 / F1).